A 170-amino-acid chain; its full sequence is Adenine phosphoribosyltransferase (170 aa).

The protein belongs to the purine/pyrimidine phosphoribosyltransferase family. In terms of assembly, homodimer.

Its subcellular location is the cytoplasm. It carries out the reaction AMP + diphosphate = 5-phospho-alpha-D-ribose 1-diphosphate + adenine. Its pathway is purine metabolism; AMP biosynthesis via salvage pathway; AMP from adenine: step 1/1. In terms of biological role, catalyzes a salvage reaction resulting in the formation of AMP, that is energically less costly than de novo synthesis. This chain is Adenine phosphoribosyltransferase, found in Cenarchaeum symbiosum (strain A).